The primary structure comprises 200 residues: Proteasome subunit beta 2 (200 aa).

A propeptide spans 1-7 (METKKTG) (removed in mature form; by autocatalysis). Thr8 serves as the catalytic Nucleophile.

Belongs to the peptidase T1B family. In terms of assembly, the 20S proteasome core is composed of 14 alpha and 14 beta subunits that assemble into four stacked heptameric rings, resulting in a barrel-shaped structure. The two inner rings, each composed of seven catalytic beta subunits, are sandwiched by two outer rings, each composed of seven alpha subunits. The catalytic chamber with the active sites is on the inside of the barrel. Has a gated structure, the ends of the cylinder being occluded by the N-termini of the alpha-subunits. Is capped at one or both ends by the proteasome regulatory ATPase, PAN.

Its subcellular location is the cytoplasm. The enzyme catalyses Cleavage of peptide bonds with very broad specificity.. The formation of the proteasomal ATPase PAN-20S proteasome complex, via the docking of the C-termini of PAN into the intersubunit pockets in the alpha-rings, triggers opening of the gate for substrate entry. Interconversion between the open-gate and close-gate conformations leads to a dynamic regulation of the 20S proteasome proteolysis activity. Its function is as follows. Component of the proteasome core, a large protease complex with broad specificity involved in protein degradation. The protein is Proteasome subunit beta 2 of Thermococcus onnurineus (strain NA1).